We begin with the raw amino-acid sequence, 404 residues long: Probable tRNA sulfurtransferase (404 aa).

The THUMP domain maps to 60–165 (EPVAEALKNV…DEAAYISHEE (106 aa)). ATP is bound by residues 183–184 (ML), 208–209 (HF), arginine 265, glycine 287, and glutamine 296.

It belongs to the ThiI family.

The protein localises to the cytoplasm. It carries out the reaction [ThiI sulfur-carrier protein]-S-sulfanyl-L-cysteine + a uridine in tRNA + 2 reduced [2Fe-2S]-[ferredoxin] + ATP + H(+) = [ThiI sulfur-carrier protein]-L-cysteine + a 4-thiouridine in tRNA + 2 oxidized [2Fe-2S]-[ferredoxin] + AMP + diphosphate. The catalysed reaction is [ThiS sulfur-carrier protein]-C-terminal Gly-Gly-AMP + S-sulfanyl-L-cysteinyl-[cysteine desulfurase] + AH2 = [ThiS sulfur-carrier protein]-C-terminal-Gly-aminoethanethioate + L-cysteinyl-[cysteine desulfurase] + A + AMP + 2 H(+). It functions in the pathway cofactor biosynthesis; thiamine diphosphate biosynthesis. Its function is as follows. Catalyzes the ATP-dependent transfer of a sulfur to tRNA to produce 4-thiouridine in position 8 of tRNAs, which functions as a near-UV photosensor. Also catalyzes the transfer of sulfur to the sulfur carrier protein ThiS, forming ThiS-thiocarboxylate. This is a step in the synthesis of thiazole, in the thiamine biosynthesis pathway. The sulfur is donated as persulfide by IscS. The protein is Probable tRNA sulfurtransferase of Streptococcus uberis (strain ATCC BAA-854 / 0140J).